The primary structure comprises 190 residues: CASP-like protein 5A3 (190 aa).

Composition is skewed to low complexity over residues 1 to 12 (MRASRPAVHPVE) and 20 to 31 (AAAEGPEAQVEG). The tract at residues 1–31 (MRASRPAVHPVEAAPPPPAAAAEGPEAQVEG) is disordered. The Cytoplasmic portion of the chain corresponds to 1–50 (MRASRPAVHPVEAAPPPPAAAAEGPEAQVEGAAHPRGVRMKDPPGAPGTP). The helical transmembrane segment at 51–71 (AGLGLRLAQAFFAAAALAVMA) threads the bilayer. Topologically, residues 72-81 (STNDFPSVSA) are extracellular. Residues 82 to 102 (FSYLVAAAILQCLWSLLLAFV) traverse the membrane as a helical segment. The Cytoplasmic portion of the chain corresponds to 103-126 (DIYALLVKRSLRNARAVCIFTIGD). The chain crosses the membrane as a helical span at residues 127–147 (GITGTITLGAACASAGITVLI). Residues 148–164 (GNDLNICAENHCASFET) are Extracellular-facing. A helical membrane pass occupies residues 165 to 185 (ATALAFISWFALAPSCILNFW). At 186-190 (SMASR) the chain is on the cytoplasmic side.

Belongs to the Casparian strip membrane proteins (CASP) family. In terms of assembly, homodimer and heterodimers.

Its subcellular location is the cell membrane. In Zea mays (Maize), this protein is CASP-like protein 5A3.